The following is a 95-amino-acid chain: Aspartyl/glutamyl-tRNA(Asn/Gln) amidotransferase subunit C (95 aa).

This sequence belongs to the GatC family. In terms of assembly, heterotrimer of A, B and C subunits.

It carries out the reaction L-glutamyl-tRNA(Gln) + L-glutamine + ATP + H2O = L-glutaminyl-tRNA(Gln) + L-glutamate + ADP + phosphate + H(+). It catalyses the reaction L-aspartyl-tRNA(Asn) + L-glutamine + ATP + H2O = L-asparaginyl-tRNA(Asn) + L-glutamate + ADP + phosphate + 2 H(+). In terms of biological role, allows the formation of correctly charged Asn-tRNA(Asn) or Gln-tRNA(Gln) through the transamidation of misacylated Asp-tRNA(Asn) or Glu-tRNA(Gln) in organisms which lack either or both of asparaginyl-tRNA or glutaminyl-tRNA synthetases. The reaction takes place in the presence of glutamine and ATP through an activated phospho-Asp-tRNA(Asn) or phospho-Glu-tRNA(Gln). This chain is Aspartyl/glutamyl-tRNA(Asn/Gln) amidotransferase subunit C, found in Jannaschia sp. (strain CCS1).